We begin with the raw amino-acid sequence, 309 residues long: Formimidoylglutamase (309 aa).

Residues histidine 128, aspartate 153, histidine 155, aspartate 157, cysteine 240, and aspartate 242 each coordinate Mn(2+).

Belongs to the arginase family. The cofactor is Mn(2+).

It catalyses the reaction N-formimidoyl-L-glutamate + H2O = formamide + L-glutamate. It functions in the pathway amino-acid degradation; L-histidine degradation into L-glutamate; L-glutamate from N-formimidoyl-L-glutamate (hydrolase route): step 1/1. Functionally, catalyzes the conversion of N-formimidoyl-L-glutamate to L-glutamate and formamide. This Staphylococcus carnosus (strain TM300) protein is Formimidoylglutamase.